A 229-amino-acid chain; its full sequence is Ribonuclease S-6 (229 aa).

The N-terminal stretch at 1 to 27 (MGITGMIYMVPMVFSLIVLISCSSTMG) is a signal peptide. Gln-36 serves as a coordination point for RNA. The cysteines at positions 42 and 49 are disulfide-linked. His-60 contacts RNA. The active-site Proton donor is the His-60. Cys-75 and Cys-119 are oxidised to a cystine. Asn-77 and Asn-87 each carry an N-linked (GlcNAc) asparagine glycan. Residues 98–99 (NV), Phe-108, 111–112 (RQ), and 115–116 (KH) contribute to the RNA site. Gln-112 is a catalytic residue. The Proton acceptor role is filled by His-116. A glycan (N-linked (GlcNAc...) (high mannose) asparagine) is linked at Asn-145. 2 disulfides stabilise this stretch: Cys-184–Cys-222 and Cys-199–Cys-210. Asn-188 carries an N-linked (GlcNAc) asparagine; alternate glycan. Asn-188 and Asn-203 each carry an N-linked (GlcNAc...) asparagine; alternate glycan.

It belongs to the RNase T2 family. The N-glycans attached at Asn-188 and Asn-203 consist of either monosaccharide (GlcNAc) or disaccharide (GlcNAc-GlcNAc) that could not be distinguished.

The catalysed reaction is a ribonucleotidyl-ribonucleotide-RNA + H2O = a 3'-end 3'-phospho-ribonucleotide-RNA + a 5'-end dephospho-ribonucleoside-RNA + H(+). Its function is as follows. Self-incompatibility (SI) is the inherited ability of a flowering plant to prevent self-fertilization by discriminating between self and non-self pollen during pollination. In many species, self-incompatibility is controlled by the single, multiallelic locus S. This is Ribonuclease S-6 from Pyrus pyrifolia (Chinese pear).